The primary structure comprises 164 residues: Terminase, small subunit (164 aa).

The helix-turn-helix (HTH) stretch occupies residues 1 to 35; it reads MEGLDINKLLDISDLPGIDGEEIKVYEPLQLVEVK. The interval 1–35 is interaction with gp17; the sequence is MEGLDINKLLDISDLPGIDGEEIKVYEPLQLVEVK. The tract at residues 36–114 is oligomerization; that stretch reads SNPQNRTPDL…KDMKDITSEQ (79 aa). Residues 115-164 are interaction with gp17; the sequence is VGTKGAVPTGQMNIQNATVFMGSPTELMDEIGDAYEAQEAREKVINGTTD.

As to quaternary structure, homooctamer. Interacts with the terminase large subunit gp17; the active complex is probably heterooligomeric.

Its function is as follows. The terminase small subunit binds to the packaging initiation site and regulates the ATPase activity of the terminase large subunit. The terminase lies at a unique vertex of the procapsid and is composed of two subunits, a small terminase subunit involved in viral DNA recognition (packaging 'pac' sequence), and a large terminase subunit possessing endonucleolytic and ATPase activities. Both terminase subunits heterooligomerize and are docked on the portal protein to form the packaging machine. The terminase large subunit exhibits endonuclease activity and cleaves the viral genome concatemer once the capsid is full (headful packaging). Once the capsid is packaged with the DNA, the terminase complex is substituted by neck proteins. The sequence is that of Terminase, small subunit (16) from Enterobacteria phage T4 (Bacteriophage T4).